Here is a 100-residue protein sequence, read N- to C-terminus: Large ribosomal subunit protein uL23 (100 aa).

The protein belongs to the universal ribosomal protein uL23 family. As to quaternary structure, part of the 50S ribosomal subunit. Contacts protein L29, and trigger factor when it is bound to the ribosome.

Functionally, one of the early assembly proteins it binds 23S rRNA. One of the proteins that surrounds the polypeptide exit tunnel on the outside of the ribosome. Forms the main docking site for trigger factor binding to the ribosome. The protein is Large ribosomal subunit protein uL23 of Prochlorococcus marinus (strain MIT 9301).